Here is a 286-residue protein sequence, read N- to C-terminus: Shikimate dehydrogenase (NADP(+)) (286 aa).

Shikimate contacts are provided by residues 22–24 and Thr-71; that span reads SRS. Lys-75 functions as the Proton acceptor in the catalytic mechanism. Glu-87 is an NADP(+) binding site. The shikimate site is built by Asn-96 and Asp-111. NADP(+)-binding positions include 136–140, 160–165, and Ile-225; these read GAGGA and NRTAAR. Tyr-227 contacts shikimate. Gly-248 is an NADP(+) binding site.

The protein belongs to the shikimate dehydrogenase family. In terms of assembly, homodimer.

The enzyme catalyses shikimate + NADP(+) = 3-dehydroshikimate + NADPH + H(+). It participates in metabolic intermediate biosynthesis; chorismate biosynthesis; chorismate from D-erythrose 4-phosphate and phosphoenolpyruvate: step 4/7. In terms of biological role, involved in the biosynthesis of the chorismate, which leads to the biosynthesis of aromatic amino acids. Catalyzes the reversible NADPH linked reduction of 3-dehydroshikimate (DHSA) to yield shikimate (SA). This chain is Shikimate dehydrogenase (NADP(+)), found in Sinorhizobium fredii (strain NBRC 101917 / NGR234).